Consider the following 195-residue polypeptide: 3-isopropylmalate dehydratase small subunit (195 aa).

Belongs to the LeuD family. LeuD type 1 subfamily. As to quaternary structure, heterodimer of LeuC and LeuD.

It carries out the reaction (2R,3S)-3-isopropylmalate = (2S)-2-isopropylmalate. It functions in the pathway amino-acid biosynthesis; L-leucine biosynthesis; L-leucine from 3-methyl-2-oxobutanoate: step 2/4. Catalyzes the isomerization between 2-isopropylmalate and 3-isopropylmalate, via the formation of 2-isopropylmaleate. This is 3-isopropylmalate dehydratase small subunit from Rubrobacter xylanophilus (strain DSM 9941 / JCM 11954 / NBRC 16129 / PRD-1).